The chain runs to 472 residues: 2-oxoglutarate carboxylase small subunit (472 aa).

Residues 1-445 form the Biotin carboxylation domain; that stretch reads MFKKVLVANR…TTRYLEEHPH (445 aa). 2 residues coordinate ATP: K115 and E199. The ATP-grasp domain occupies 119–316; sequence KEVMKRAGVP…IVKWQIRIAA (198 aa). The active site involves R291.

Heterohexadecamer of 8 large subunits and 8 small subunits. It depends on Mg(2+) as a cofactor. Requires Mn(2+) as cofactor. Co(2+) is required as a cofactor.

The catalysed reaction is hydrogencarbonate + 2-oxoglutarate + ATP = (S)-oxalosuccinate + ADP + phosphate + H(+). The sequence is that of 2-oxoglutarate carboxylase small subunit from Hydrogenobacter thermophilus (strain DSM 6534 / IAM 12695 / TK-6).